We begin with the raw amino-acid sequence, 79 residues long: Potassium channel toxin Hge-beta-KTx (79 aa).

A signal peptide spans 1-21 (MAKSFFAAFLIIMLISSLVDG). The BetaSPN-type CS-alpha/beta domain occupies 48–79 (EYMCPVVSSFCKQHCARLGKSGQCDLLECICS). 3 disulfides stabilise this stretch: Cys-51/Cys-71, Cys-58/Cys-76, and Cys-62/Cys-78.

As to expression, expressed by the venom gland.

The protein resides in the secreted. The full peptide presents antibacterial and cytotoxic activities. The synthetic C-terminus (AA 33-76) inhibits voltage-gated potassium channels Kv1.1/KCNA1, Kv1.2/KCNA2, and Kv1.3/KCNA3. This is Potassium channel toxin Hge-beta-KTx from Hoffmannihadrurus gertschi (Scorpion).